Consider the following 884-residue polypeptide: Translation initiation factor IF-2 (884 aa).

The tract at residues 58–248 (PEKVEQKRVR…GKTESVETEE (191 aa)) is disordered. Residues 66–77 (VRSNVIRKRRQP) show a composition bias toward basic residues. Residues 87 to 106 (EAPAAQAPEAEEVTAPTAEE) show a composition bias toward low complexity. Residues 172-183 (SRKKAKAKKHQA) show a composition bias toward basic residues. The segment covering 207–223 (DTAPADSPAAPAAATPA) has biased composition (low complexity). The span at 229–239 (KPSRKDRKKRG) shows a compositional bias: basic residues. The tr-type G domain occupies 384–553 (KRAPVVTIMG…LLQAEMLELK (170 aa)). Residues 393 to 400 (GHVDHGKT) are G1. 393 to 400 (GHVDHGKT) is a GTP binding site. A G2 region spans residues 418-422 (GITQH). Residues 439 to 442 (DTPG) form a G3 region. GTP-binding positions include 439–443 (DTPGH) and 493–496 (NKID). The G4 stretch occupies residues 493-496 (NKID). The segment at 529 to 531 (SAK) is G5.

It belongs to the TRAFAC class translation factor GTPase superfamily. Classic translation factor GTPase family. IF-2 subfamily.

The protein resides in the cytoplasm. In terms of biological role, one of the essential components for the initiation of protein synthesis. Protects formylmethionyl-tRNA from spontaneous hydrolysis and promotes its binding to the 30S ribosomal subunits. Also involved in the hydrolysis of GTP during the formation of the 70S ribosomal complex. This chain is Translation initiation factor IF-2, found in Desulfosudis oleivorans (strain DSM 6200 / JCM 39069 / Hxd3) (Desulfococcus oleovorans).